The chain runs to 670 residues: Probable Rho-GTPase-activating protein 9 (670 aa).

One can recognise an F-BAR domain in the interval 3–392 (DGFSNSFWSR…SFKNLDSLRD (390 aa)). Residues 141–161 (NSKKSNLTDRKPIPTSRKSNK) are disordered. In terms of domain architecture, Rho-GAP spans 425–622 (SSLTEDNLIV…DLINEFENLF (198 aa)). Threonine 640 carries the phosphothreonine modification. Polar residues predominate over residues 641–663 (PITTSPQKLKLPRSSSPCKNPSP). The interval 641–670 (PITTSPQKLKLPRSSSPCKNPSPTRRFRPF) is disordered. Position 645 is a phosphoserine (serine 645).

It is found in the cytoplasm. This Schizosaccharomyces pombe (strain 972 / ATCC 24843) (Fission yeast) protein is Probable Rho-GTPase-activating protein 9 (rga9).